The primary structure comprises 951 residues: Replication protein A 70 kDa DNA-binding subunit C (951 aa).

Residues 139–172 (AQTNNGTYSGGASMLGPSVAPRAEQAASNSSYGG) are disordered. Positions 320-403 (WTIKARVTAK…NTLNHDYEIT (84 aa)) form a DNA-binding region, OB. Residues 612–639 (CPKLLPVGRQCNKKAINNGDGMWHCDRC) form a C4-type zinc finger.

It belongs to the replication factor A protein 1 family. As to quaternary structure, heterotrimer of RPA1, RPA2 and RPA3 (canonical replication protein A complex). Interacts with RPA2C.

Its subcellular location is the nucleus. Functionally, component of the replication protein A complex (RPA) required for DNA recombination, repair and replication. The activity of RPA is mediated by single-stranded DNA binding and protein interactions. Probably involved in repair of double-strand DNA breaks (DSBs) induced by genotoxic stresses. This is Replication protein A 70 kDa DNA-binding subunit C (RPA1C) from Oryza sativa subsp. japonica (Rice).